We begin with the raw amino-acid sequence, 688 residues long: Protein SDA1 homolog (688 aa).

S232, S234, and S236 each carry phosphoserine. Residues 254 to 318 (KKSSKNKKKL…ERFEVKMMLM (65 aa)) are a coiled coil. A compositionally biased stretch (acidic residues) spans 484–498 (VENEEENAEGDEDGW). Positions 484 to 524 (VENEEENAEGDEDGWESASLSDEADSDGEWVDVHHSSDEEQ) are disordered. Residues 514–524 (VDVHHSSDEEQ) show a composition bias toward basic and acidic residues. Phosphoserine is present on residues S586 and S596. The interval 605–688 (KKPKSDKETR…ALLKKRKRMK (84 aa)) is disordered. Over residues 668–681 (SFREKQLALRDALL) the composition is skewed to basic and acidic residues.

The protein belongs to the SDA1 family.

Its subcellular location is the nucleus. It localises to the nucleolus. Functionally, required for 60S pre-ribosomal subunits export to the cytoplasm. The polypeptide is Protein SDA1 homolog (SDAD1) (Bos taurus (Bovine)).